The chain runs to 426 residues: Adenylosuccinate synthetase 2 (426 aa).

GTP is bound by residues 12–18 (GDEGKGK) and 40–42 (GHT). The active-site Proton acceptor is Asp-13. Positions 13 and 40 each coordinate Mg(2+). Residues 13–16 (DEGK), 38–41 (NAGH), Arg-147, Asn-223, Thr-238, and Arg-302 contribute to the IMP site. The Proton donor role is filled by His-41. Substrate is bound at residue 298–304 (TNTGRRR). Residues Arg-304, 330-332 (KLD), and 412-414 (GVG) each bind GTP.

This sequence belongs to the adenylosuccinate synthetase family. In terms of assembly, homodimer. Requires Mg(2+) as cofactor.

The protein resides in the cytoplasm. The enzyme catalyses IMP + L-aspartate + GTP = N(6)-(1,2-dicarboxyethyl)-AMP + GDP + phosphate + 2 H(+). It participates in purine metabolism; AMP biosynthesis via de novo pathway; AMP from IMP: step 1/2. In terms of biological role, plays an important role in the de novo pathway and in the salvage pathway of purine nucleotide biosynthesis. Catalyzes the first committed step in the biosynthesis of AMP from IMP. The sequence is that of Adenylosuccinate synthetase 2 from Laccaria bicolor (strain S238N-H82 / ATCC MYA-4686) (Bicoloured deceiver).